A 188-amino-acid polypeptide reads, in one-letter code: Peptidyl-tRNA hydrolase (188 aa).

Tyr14 is a tRNA binding site. His19 serves as the catalytic Proton acceptor. Residues Tyr64, Asn66, and Asn112 each coordinate tRNA.

It belongs to the PTH family. As to quaternary structure, monomer.

It localises to the cytoplasm. The enzyme catalyses an N-acyl-L-alpha-aminoacyl-tRNA + H2O = an N-acyl-L-amino acid + a tRNA + H(+). Its function is as follows. Hydrolyzes ribosome-free peptidyl-tRNAs (with 1 or more amino acids incorporated), which drop off the ribosome during protein synthesis, or as a result of ribosome stalling. Functionally, catalyzes the release of premature peptidyl moieties from peptidyl-tRNA molecules trapped in stalled 50S ribosomal subunits, and thus maintains levels of free tRNAs and 50S ribosomes. Releases Ala-tailed nascent peptides from stalled 50S ribosomal subunits. Non-templated Ala tailing occurs as part of the ribosome quality control (RQC) pathway. In the absence of Ala tails significantly less peptide release occurs. The Ala tail facilitates the interaction of Pth with the nascent peptide-tRNA ester bond as well as promoting nascent chain degradation; 3 Ala residues suffice to stimulate peptide release from stalled 50S ribosomal subunits. Complements a temperature-sensitive pth mutation in E.coli. This Bacillus subtilis (strain 168) protein is Peptidyl-tRNA hydrolase.